A 130-amino-acid chain; its full sequence is Small ribosomal subunit protein uS8 (130 aa).

The protein belongs to the universal ribosomal protein uS8 family. Part of the 30S ribosomal subunit. Contacts proteins S5 and S12.

In terms of biological role, one of the primary rRNA binding proteins, it binds directly to 16S rRNA central domain where it helps coordinate assembly of the platform of the 30S subunit. This chain is Small ribosomal subunit protein uS8, found in Pasteurella multocida (strain Pm70).